A 48-amino-acid polypeptide reads, in one-letter code: Small, acid-soluble spore protein O (48 aa).

Residues 1–23 (MTKRKANHVINGMNAAKSQGNGA) are disordered.

It belongs to the SspO family.

It is found in the spore core. This Bacillus pumilus (strain SAFR-032) protein is Small, acid-soluble spore protein O.